Reading from the N-terminus, the 88-residue chain is Small ribosomal subunit protein uS19 (88 aa).

The protein belongs to the universal ribosomal protein uS19 family.

Protein S19 forms a complex with S13 that binds strongly to the 16S ribosomal RNA. This is Small ribosomal subunit protein uS19 (rpsS) from Chlamydia muridarum (strain MoPn / Nigg).